Consider the following 340-residue polypeptide: Histidinol-phosphate aminotransferase (340 aa).

K204 carries the N6-(pyridoxal phosphate)lysine modification.

The protein belongs to the class-II pyridoxal-phosphate-dependent aminotransferase family. Histidinol-phosphate aminotransferase subfamily. Requires pyridoxal 5'-phosphate as cofactor.

The catalysed reaction is L-histidinol phosphate + 2-oxoglutarate = 3-(imidazol-4-yl)-2-oxopropyl phosphate + L-glutamate. Its pathway is amino-acid biosynthesis; L-histidine biosynthesis; L-histidine from 5-phospho-alpha-D-ribose 1-diphosphate: step 7/9. This is Histidinol-phosphate aminotransferase from Thermococcus gammatolerans (strain DSM 15229 / JCM 11827 / EJ3).